The primary structure comprises 647 residues: Protein INVOLVED IN DE NOVO 2 (647 aa).

Disordered regions lie at residues 1-20 and 101-123; these read MGST…SESE and SASE…DCDH. Over residues 9–20 the composition is skewed to acidic residues; sequence SDDEDSDISESE. The stretch at 253–508 forms a coiled coil; the sequence is IAELTEEEAR…NIMKEWNTNI (256 aa).

As to quaternary structure, interacts with FMD1/IDNL1. Forms a complex with FMD1/IDNL1 and FMD2/INDL2. Can form homodimers. Interacts with MORC6.

Forms a complex with FDM1/IDNL1 and FDM2/IDNL2 that is required for RNA-directed DNA methylation (RdDM) and that functions at a downstream step of the RdDM pathway and downstream of small interfering RNA (siRNA) formation. Required for de novo DNA methylation, siRNA accumulation and siRNA-mediated maintenance methylation. Required for several post-transcriptional gene silencing pathways. Binds double-stranded RNAs (dsRNAs) with 5'-overhangs through its XS domain. Binds long non-coding RNA (lncRNA) in an AGO4-dependent manner and associates with DRM2, resulting in DNA methylation of RdDM target loci. Mediates the silencing of a subset of MORC6 target loci. This is Protein INVOLVED IN DE NOVO 2 from Arabidopsis thaliana (Mouse-ear cress).